The chain runs to 123 residues: Small ribosomal subunit protein bS6 (123 aa).

Residues M102–E123 form a disordered region. The span at K104–E123 shows a compositional bias: basic and acidic residues.

Belongs to the bacterial ribosomal protein bS6 family.

Functionally, binds together with bS18 to 16S ribosomal RNA. In Vibrio vulnificus (strain CMCP6), this protein is Small ribosomal subunit protein bS6.